A 150-amino-acid polypeptide reads, in one-letter code: Cytochrome c oxidase subunit 5A, mitochondrial (150 aa).

The N-terminal 41 residues, 1-41, are a transit peptide targeting the mitochondrion; sequence MLGAALRRCAVAATTRADPRGLLHSARTPGPAVAIQSVRCY. Positions 2 to 17 match the SIFI-degron motif; sequence LGAALRRCAVAATTRA. Residues lysine 87 and lysine 113 each carry the N6-acetyllysine modification. Threonine 141 is modified (phosphothreonine).

The protein belongs to the cytochrome c oxidase subunit 5A family. Component of the cytochrome c oxidase (complex IV, CIV), a multisubunit enzyme composed of 14 subunits. The complex is composed of a catalytic core of 3 subunits MT-CO1, MT-CO2 and MT-CO3, encoded in the mitochondrial DNA, and 11 supernumerary subunits COX4I1 (or COX4I2), COX5A, COX5B, COX6A1 (or COX6A2), COX6B1 (or COX6B2), COX6C, COX7A2 (or COX7A1), COX7B, COX7C, COX8A and NDUFA4, which are encoded in the nuclear genome. The complex exists as a monomer or a dimer and forms supercomplexes (SCs) in the inner mitochondrial membrane with NADH-ubiquinone oxidoreductase (complex I, CI) and ubiquinol-cytochrome c oxidoreductase (cytochrome b-c1 complex, complex III, CIII), resulting in different assemblies (supercomplex SCI(1)III(2)IV(1) and megacomplex MCI(2)III(2)IV(2)). Interacts with AFG1L. Interacts with RAB5IF. In terms of processing, in response to mitochondrial stress, the precursor protein is ubiquitinated by the SIFI complex in the cytoplasm before mitochondrial import, leading to its degradation. Within the SIFI complex, UBR4 initiates ubiquitin chain that are further elongated or branched by KCMF1.

It is found in the mitochondrion inner membrane. It participates in energy metabolism; oxidative phosphorylation. Functionally, component of the cytochrome c oxidase, the last enzyme in the mitochondrial electron transport chain which drives oxidative phosphorylation. The respiratory chain contains 3 multisubunit complexes succinate dehydrogenase (complex II, CII), ubiquinol-cytochrome c oxidoreductase (cytochrome b-c1 complex, complex III, CIII) and cytochrome c oxidase (complex IV, CIV), that cooperate to transfer electrons derived from NADH and succinate to molecular oxygen, creating an electrochemical gradient over the inner membrane that drives transmembrane transport and the ATP synthase. Cytochrome c oxidase is the component of the respiratory chain that catalyzes the reduction of oxygen to water. Electrons originating from reduced cytochrome c in the intermembrane space (IMS) are transferred via the dinuclear copper A center (CU(A)) of subunit 2 and heme A of subunit 1 to the active site in subunit 1, a binuclear center (BNC) formed by heme A3 and copper B (CU(B)). The BNC reduces molecular oxygen to 2 water molecules using 4 electrons from cytochrome c in the IMS and 4 protons from the mitochondrial matrix. The sequence is that of Cytochrome c oxidase subunit 5A, mitochondrial (COX5A) from Homo sapiens (Human).